The following is a 261-amino-acid chain: 4-hydroxy-tetrahydrodipicolinate reductase (261 aa).

Residues 11 to 16, 96 to 98, and 122 to 125 contribute to the NAD(+) site; these read GFTGAM, GTT, and APNF. The Proton donor/acceptor role is filled by His-152. His-153 contributes to the (S)-2,3,4,5-tetrahydrodipicolinate binding site. The Proton donor role is filled by Lys-156. Residue 162 to 163 coordinates (S)-2,3,4,5-tetrahydrodipicolinate; it reads GT.

Belongs to the DapB family.

Its subcellular location is the cytoplasm. The catalysed reaction is (S)-2,3,4,5-tetrahydrodipicolinate + NAD(+) + H2O = (2S,4S)-4-hydroxy-2,3,4,5-tetrahydrodipicolinate + NADH + H(+). It catalyses the reaction (S)-2,3,4,5-tetrahydrodipicolinate + NADP(+) + H2O = (2S,4S)-4-hydroxy-2,3,4,5-tetrahydrodipicolinate + NADPH + H(+). Its pathway is amino-acid biosynthesis; L-lysine biosynthesis via DAP pathway; (S)-tetrahydrodipicolinate from L-aspartate: step 4/4. Its function is as follows. Catalyzes the conversion of 4-hydroxy-tetrahydrodipicolinate (HTPA) to tetrahydrodipicolinate. The sequence is that of 4-hydroxy-tetrahydrodipicolinate reductase from Lactobacillus acidophilus (strain ATCC 700396 / NCK56 / N2 / NCFM).